Reading from the N-terminus, the 387-residue chain is 1-deoxy-D-xylulose 5-phosphate reductoisomerase (387 aa).

The NADPH site is built by Thr10, Gly11, Ser12, Ile13, Gly36, Arg37, and Asn124. Residue Lys125 coordinates 1-deoxy-D-xylulose 5-phosphate. Residue Glu126 coordinates NADPH. Asp150 contributes to the Mn(2+) binding site. Positions 151, 152, 176, and 199 each coordinate 1-deoxy-D-xylulose 5-phosphate. Glu152 is a Mn(2+) binding site. Residue Gly205 participates in NADPH binding. Ser212, Asn217, Lys218, and Glu221 together coordinate 1-deoxy-D-xylulose 5-phosphate. Glu221 lines the Mn(2+) pocket.

It belongs to the DXR family. Mg(2+) serves as cofactor. It depends on Mn(2+) as a cofactor.

The enzyme catalyses 2-C-methyl-D-erythritol 4-phosphate + NADP(+) = 1-deoxy-D-xylulose 5-phosphate + NADPH + H(+). Its pathway is isoprenoid biosynthesis; isopentenyl diphosphate biosynthesis via DXP pathway; isopentenyl diphosphate from 1-deoxy-D-xylulose 5-phosphate: step 1/6. Its function is as follows. Catalyzes the NADPH-dependent rearrangement and reduction of 1-deoxy-D-xylulose-5-phosphate (DXP) to 2-C-methyl-D-erythritol 4-phosphate (MEP). This chain is 1-deoxy-D-xylulose 5-phosphate reductoisomerase, found in Cyanothece sp. (strain PCC 7425 / ATCC 29141).